The chain runs to 427 residues: Nuclear distribution protein PAC1-2 (427 aa).

The 33-residue stretch at 8–40 (QKDDLNKSIAEYLYAQDLTEIADSLCARLSLDY) folds into the LisH domain. The stretch at 58–82 (SVIRLQKKLIESENRYTALQEDIAA) forms a coiled coil. WD repeat units lie at residues 106–147 (SHRA…RTLK), 149–187 (HTRE…NAGY), 194–233 (GHEH…CIRT), 236–275 (GHED…MKME), 278–336 (GHGH…ELRT), 339–378 (GHND…CMXV), and 381–420 (AHSH…SRIM).

Belongs to the WD repeat LIS1/nudF family. Self-associates. Interacts with NDL1 and dynein.

Its subcellular location is the cytoplasm. It is found in the cytoskeleton. It localises to the spindle pole. In terms of biological role, positively regulates the activity of the minus-end directed microtubule motor protein dynein. May enhance dynein-mediated microtubule sliding by targeting dynein to the microtubule plus end. Required for nuclear migration during vegetative growth as well as development. Required for retrograde early endosome (EE) transport from the hyphal tip. Required for localization of dynein to the mitotic spindle poles. Recruits additional proteins to the dynein complex at SPBs. This Postia placenta (strain ATCC 44394 / Madison 698-R) (Brown rot fungus) protein is Nuclear distribution protein PAC1-2.